The chain runs to 206 residues: Large ribosomal subunit protein uL4 (206 aa).

Residues 44 to 80 (KRAGTHSVKTRSTISGGGAKPWRQKGTGRARSGSNRS) form a disordered region.

It belongs to the universal ribosomal protein uL4 family. As to quaternary structure, part of the 50S ribosomal subunit.

Its function is as follows. One of the primary rRNA binding proteins, this protein initially binds near the 5'-end of the 23S rRNA. It is important during the early stages of 50S assembly. It makes multiple contacts with different domains of the 23S rRNA in the assembled 50S subunit and ribosome. Functionally, forms part of the polypeptide exit tunnel. This chain is Large ribosomal subunit protein uL4, found in Oleidesulfovibrio alaskensis (strain ATCC BAA-1058 / DSM 17464 / G20) (Desulfovibrio alaskensis).